The primary structure comprises 340 residues: MIRSLHTSAVRQGRKKWPKPLPGSVTGNEFVKKLELKAPIAPALDNIEVPDSHPLWQFFCKDKKIVRDQRSFDSSTRPWSVAELRRKSFEDLHALWYVCLKERNILLKEERVTTRMHFENQNGGYRSEHDRVGETMVNIRHVLAERYRAFEEVQQVLPEVRAQANAEFDEKYVTADAVYDSELSLELERHLVAYYGFSTDPRANAGVQVDEKIIEAVKYGAKLKYERYSGATDENGNPIANHGFVHQPKRDIFEQYLMFLANDTTEGVAEALSYIKQYRESNPLPVAPWNAIRVLQHLVEEKMGAAAVFEEALKNKKLDLSEQDILENIPAQFLNKLPKE.

Residues 1–10 (MIRSLHTSAV) are compositionally biased toward polar residues. Residues 1–22 (MIRSLHTSAVRQGRKKWPKPLP) are disordered.

The protein belongs to the universal ribosomal protein uL29 family. In terms of assembly, component of the mitochondrial large ribosomal subunit. Mature mitochondrial ribosomes consist of a small (37S) and a large (54S) subunit. The 37S subunit contains at least 33 different proteins and 1 molecule of RNA (15S). The 54S subunit contains at least 45 different proteins and 1 molecule of RNA (21S).

It localises to the mitochondrion. The chain is Large ribosomal subunit protein uL29m (MRPL4) from Yarrowia lipolytica (strain CLIB 122 / E 150) (Yeast).